A 477-amino-acid chain; its full sequence is Cytochrome b mRNA maturase bI3 (477 aa).

The interval 1-163 (MRLLKSHPLL…IPWIGQDIVE (163 aa)) is cytochrome b. Helical transmembrane passes span 32-52 (FGSL…TLAM), 86-106 (ASAF…YGSY), 113-133 (VWAI…LGYV), 142-162 (WGAT…QDIV), and 166-186 (IITL…VVVY). Residues 164–477 (SKIITLIINL…YSTLNYPDAK (314 aa)) form a maturase region.

It in the N-terminal section; belongs to the cytochrome b family. In the C-terminal section; belongs to the LAGLIDADG endonuclease family.

Its subcellular location is the mitochondrion inner membrane. Functionally, mitochondrial mRNA maturase required for splicing of intron 3 of the cytochrome b (cob) gene, containing its own coding sequence. This is Cytochrome b mRNA maturase bI3 (bI3) from Neurospora crassa (strain ATCC 24698 / 74-OR23-1A / CBS 708.71 / DSM 1257 / FGSC 987).